We begin with the raw amino-acid sequence, 415 residues long: uncharacterized protein (415 aa).

Residue His-88 coordinates Zn(2+). Asp-90 is a catalytic residue. Asp-121 lines the Zn(2+) pocket. Residue Glu-155 is the Proton acceptor of the active site. Positions 156, 185, and 392 each coordinate Zn(2+).

The protein belongs to the peptidase M20A family. Zn(2+) is required as a cofactor. Requires Co(2+) as cofactor.

This is an uncharacterized protein from Methanococcus maripaludis (strain DSM 14266 / JCM 13030 / NBRC 101832 / S2 / LL).